A 358-amino-acid polypeptide reads, in one-letter code: MAVDAHHLFLSPPQLFSNRELTMNNNTMEPTSGGFCNNNQTGYGVVSPFSVPNHTSTTTTATPPLLHVYGGSDTIPTTAGYYADGATNLDCEFFPLPTRKRSRDSSRSNYHHLLLQNPRSSSCVNAATTTTTTTLFSFLGQDIDISSHMNQQQHEIDRFVSLHLYQMERVKYEIEEKRKRQARTIMEAIEQGLVKRLRVKEEERERIGKVNHALEERVKSLSIENQIWRDLAQTNEATANHLRTNLEHVLAQVKDVSRGAGLEKNMNEEDDAESCCGSSCGGGGEETVRRRVGLEREAQDKAERRRRRMCRNCGEEESCVLLLPCRHLCLCGVCGSSVHTCPICTSPKNASVHVNMSS.

The stretch at 171–234 (KYEIEEKRKR…NQIWRDLAQT (64 aa)) forms a coiled coil. The interval 214 to 250 (LEERVKSLSIENQIWRDLAQTNEATANHLRTNLEHVL) is WRD domain. An RING-type zinc finger spans residues 310–345 (CRNCGEEESCVLLLPCRHLCLCGVCGSSVHTCPICT).

In terms of assembly, interacts with the DELLA proteins GAI, RGA, RGL1, RGL2 and RGL3.

The enzyme catalyses S-ubiquitinyl-[E2 ubiquitin-conjugating enzyme]-L-cysteine + [acceptor protein]-L-lysine = [E2 ubiquitin-conjugating enzyme]-L-cysteine + N(6)-ubiquitinyl-[acceptor protein]-L-lysine.. The protein operates within protein degradation; proteasomal ubiquitin-dependent pathway. Probable E3 ubiquitin-protein ligase. Has no effect on the stability of the DELLA proteins. The protein is Probable BOI-related E3 ubiquitin-protein ligase 2 (BRG2) of Arabidopsis thaliana (Mouse-ear cress).